The sequence spans 676 residues: Vitamin K-dependent protein S (676 aa).

Residues M1 to A24 form the signal peptide. Positions N25–R41 are excised as a propeptide. In terms of domain architecture, Gla spans A42–V87. Residues E47, E48, E55, E57, E60, E61, E66, E67, E70, E73, and E77 each carry the 4-carboxyglutamate modification. A disulfide bridge connects residues C58 and C63. The segment at C88–A116 is thrombin-sensitive. In terms of domain architecture, EGF-like 1 spans I117–E155. Intrachain disulfides connect C121–C134, C126–C143, C145–C154, C161–C175, C171–C184, C186–C199, C205–C217, C212–C226, C228–C241, C247–C256, C252–C265, C267–C282, and C449–C475. D136 is modified ((3R)-3-hydroxyaspartate). Positions D157 to K200 constitute an EGF-like 2; calcium-binding domain. Positions D201–E242 constitute an EGF-like 3; calcium-binding domain. An EGF-like 4; calcium-binding domain is found at D243 to E283. Laminin G-like domains are found at residues L299 to C475 and Y484 to C666. N-linked (GlcNAc...) asparagine glycans are attached at residues N499, N509, and N530. A disulfide bridge links C639 with C666.

The iron and 2-oxoglutarate dependent 3-hydroxylation of aspartate and asparagine is (R) stereospecific within EGF domains. In terms of tissue distribution, plasma.

It is found in the secreted. Its function is as follows. Anticoagulant plasma protein; it is a cofactor to activated protein C in the degradation of coagulation factors Va and VIIIa. It helps to prevent coagulation and stimulating fibrinolysis. This Homo sapiens (Human) protein is Vitamin K-dependent protein S (PROS1).